Here is a 328-residue protein sequence, read N- to C-terminus: UPF0421 protein SAUSA300_1870 (328 aa).

4 consecutive transmembrane segments (helical) span residues 19–39 (IAIFLTAVFCMALDLTPIYAI), 61–81 (LPATVIGAGFAVLFTYLFGDQ), 108–128 (VAVLTSLAMIPGIHDAYIFNF), and 132–152 (TLTAIIGLVTSGLINFMVFPP).

This sequence belongs to the UPF0421 family.

It localises to the cell membrane. This chain is UPF0421 protein SAUSA300_1870, found in Staphylococcus aureus (strain USA300).